The primary structure comprises 466 residues: Glycylpeptide N-tetradecanoyltransferase (466 aa).

Residues 1 to 21 (MDNENNKNTKNSQQDSSFSEG) are disordered. A compositionally biased stretch (polar residues) spans 8–19 (NTKNSQQDSSFS). At Ser-17 the chain carries Phosphoserine. Tetradecanoyl-CoA contacts are provided by residues 51-54 (FKFW), 185-187 (LCI), and 193-197 (SKRLT). Ile-466 acts as the Proton acceptor; via carboxylate in catalysis.

Belongs to the NMT family. In terms of assembly, monomer.

The protein resides in the cytoplasm. It carries out the reaction N-terminal glycyl-[protein] + tetradecanoyl-CoA = N-tetradecanoylglycyl-[protein] + CoA + H(+). Functionally, adds a myristoyl group to the N-terminal glycine residue of certain cellular proteins. The protein is Glycylpeptide N-tetradecanoyltransferase (nmt1) of Schizosaccharomyces pombe (strain 972 / ATCC 24843) (Fission yeast).